Here is a 205-residue protein sequence, read N- to C-terminus: Potassium-transporting ATPase KdpC subunit (205 aa).

The chain crosses the membrane as a helical span at residues 7 to 27 (PAIVILVALTIITGLIYPLAM).

Belongs to the KdpC family. As to quaternary structure, the system is composed of three essential subunits: KdpA, KdpB and KdpC.

Its subcellular location is the cell inner membrane. In terms of biological role, part of the high-affinity ATP-driven potassium transport (or Kdp) system, which catalyzes the hydrolysis of ATP coupled with the electrogenic transport of potassium into the cytoplasm. This subunit acts as a catalytic chaperone that increases the ATP-binding affinity of the ATP-hydrolyzing subunit KdpB by the formation of a transient KdpB/KdpC/ATP ternary complex. The protein is Potassium-transporting ATPase KdpC subunit of Nitrobacter hamburgensis (strain DSM 10229 / NCIMB 13809 / X14).